Reading from the N-terminus, the 571-residue chain is Isocitrate dehydrogenase kinase/phosphatase 2 (571 aa).

ATP contacts are provided by residues 313 to 319 and Lys-334; that span reads APGTPGM. The active site involves Asp-369.

It belongs to the AceK family.

It is found in the cytoplasm. The enzyme catalyses L-seryl-[isocitrate dehydrogenase] + ATP = O-phospho-L-seryl-[isocitrate dehydrogenase] + ADP + H(+). In terms of biological role, bifunctional enzyme which can phosphorylate or dephosphorylate isocitrate dehydrogenase (IDH) on a specific serine residue. This is a regulatory mechanism which enables bacteria to bypass the Krebs cycle via the glyoxylate shunt in response to the source of carbon. When bacteria are grown on glucose, IDH is fully active and unphosphorylated, but when grown on acetate or ethanol, the activity of IDH declines drastically concomitant with its phosphorylation. The sequence is that of Isocitrate dehydrogenase kinase/phosphatase 2 from Pseudoalteromonas translucida (strain TAC 125).